The sequence spans 433 residues: NADH-quinone oxidoreductase subunit D (433 aa).

It belongs to the complex I 49 kDa subunit family. As to quaternary structure, NDH-1 is composed of 14 different subunits. Subunits NuoB, C, D, E, F, and G constitute the peripheral sector of the complex.

It localises to the cell membrane. It carries out the reaction a quinone + NADH + 5 H(+)(in) = a quinol + NAD(+) + 4 H(+)(out). In terms of biological role, NDH-1 shuttles electrons from NADH, via FMN and iron-sulfur (Fe-S) centers, to quinones in the respiratory chain. The immediate electron acceptor for the enzyme in this species is believed to be a menaquinone. Couples the redox reaction to proton translocation (for every two electrons transferred, four hydrogen ions are translocated across the cytoplasmic membrane), and thus conserves the redox energy in a proton gradient. This is NADH-quinone oxidoreductase subunit D from Cutibacterium acnes (strain DSM 16379 / KPA171202) (Propionibacterium acnes).